The sequence spans 119 residues: MTRVPRGYIARRRRTKMRSFASNFRGAHLRLNRMITQQVKRAFVSSHRDRGRQKRDFRRLWITRINAATRIYKVFDSYSKLIHNLYKKKLILNRKMLAQVAVSNPNNLYTISNKIKIIN.

The protein belongs to the bacterial ribosomal protein bL20 family.

It is found in the plastid. The protein localises to the chloroplast. Its function is as follows. Binds directly to 23S ribosomal RNA and is necessary for the in vitro assembly process of the 50S ribosomal subunit. It is not involved in the protein synthesizing functions of that subunit. This Lolium perenne (Perennial ryegrass) protein is Large ribosomal subunit protein bL20c.